The following is a 395-amino-acid chain: ATP phosphoribosyltransferase regulatory subunit (395 aa).

This sequence belongs to the class-II aminoacyl-tRNA synthetase family. HisZ subfamily. In terms of assembly, heteromultimer composed of HisG and HisZ subunits.

It is found in the cytoplasm. The protein operates within amino-acid biosynthesis; L-histidine biosynthesis; L-histidine from 5-phospho-alpha-D-ribose 1-diphosphate: step 1/9. Required for the first step of histidine biosynthesis. May allow the feedback regulation of ATP phosphoribosyltransferase activity by histidine. The chain is ATP phosphoribosyltransferase regulatory subunit from Pseudomonas putida (strain ATCC 700007 / DSM 6899 / JCM 31910 / BCRC 17059 / LMG 24140 / F1).